The sequence spans 99 residues: Large ribosomal subunit protein bL27 (99 aa).

The propeptide occupies 1–10; that stretch reads MKLIFDIQLF.

This sequence belongs to the bacterial ribosomal protein bL27 family. The N-terminus is cleaved by ribosomal processing cysteine protease Prp.

In Caldicellulosiruptor bescii (strain ATCC BAA-1888 / DSM 6725 / KCTC 15123 / Z-1320) (Anaerocellum thermophilum), this protein is Large ribosomal subunit protein bL27.